The primary structure comprises 334 residues: Phosphate acyltransferase (334 aa).

Belongs to the PlsX family. Homodimer. Probably interacts with PlsY.

It localises to the cytoplasm. It catalyses the reaction a fatty acyl-[ACP] + phosphate = an acyl phosphate + holo-[ACP]. Its pathway is lipid metabolism; phospholipid metabolism. Its function is as follows. Catalyzes the reversible formation of acyl-phosphate (acyl-PO(4)) from acyl-[acyl-carrier-protein] (acyl-ACP). This enzyme utilizes acyl-ACP as fatty acyl donor, but not acyl-CoA. The sequence is that of Phosphate acyltransferase from Fervidobacterium nodosum (strain ATCC 35602 / DSM 5306 / Rt17-B1).